A 500-amino-acid chain; its full sequence is Lysine--tRNA ligase (500 aa).

Residues E410 and E417 each contribute to the Mg(2+) site.

This sequence belongs to the class-II aminoacyl-tRNA synthetase family. Homodimer. Mg(2+) is required as a cofactor.

It localises to the cytoplasm. It carries out the reaction tRNA(Lys) + L-lysine + ATP = L-lysyl-tRNA(Lys) + AMP + diphosphate. The protein is Lysine--tRNA ligase of Shewanella frigidimarina (strain NCIMB 400).